A 203-amino-acid polypeptide reads, in one-letter code: ATP phosphoribosyltransferase (203 aa).

Belongs to the ATP phosphoribosyltransferase family. Short subfamily.

The protein resides in the cytoplasm. It catalyses the reaction 1-(5-phospho-beta-D-ribosyl)-ATP + diphosphate = 5-phospho-alpha-D-ribose 1-diphosphate + ATP. Its pathway is amino-acid biosynthesis; L-histidine biosynthesis; L-histidine from 5-phospho-alpha-D-ribose 1-diphosphate: step 1/9. Functionally, catalyzes the condensation of ATP and 5-phosphoribose 1-diphosphate to form N'-(5'-phosphoribosyl)-ATP (PR-ATP). Has a crucial role in the pathway because the rate of histidine biosynthesis seems to be controlled primarily by regulation of HisG enzymatic activity. This is ATP phosphoribosyltransferase from Thermococcus kodakarensis (strain ATCC BAA-918 / JCM 12380 / KOD1) (Pyrococcus kodakaraensis (strain KOD1)).